The chain runs to 312 residues: Pantothenate kinase (312 aa).

Residue 92–99 (GSVAVGKS) coordinates ATP.

This sequence belongs to the prokaryotic pantothenate kinase family.

The protein localises to the cytoplasm. It carries out the reaction (R)-pantothenate + ATP = (R)-4'-phosphopantothenate + ADP + H(+). It functions in the pathway cofactor biosynthesis; coenzyme A biosynthesis; CoA from (R)-pantothenate: step 1/5. In Vibrio cholerae serotype O1 (strain ATCC 39315 / El Tor Inaba N16961), this protein is Pantothenate kinase (coaA).